Consider the following 29-residue polypeptide: Trypsin inhibitor 5 (29 aa).

Intrachain disulfides connect Cys-3/Cys-20, Cys-10/Cys-22, and Cys-16/Cys-28.

The protein belongs to the protease inhibitor I7 (squash-type serine protease inhibitor) family.

The protein resides in the secreted. In terms of biological role, strongly inhibits trypsin, weakly inhibits chymotrypsin. This chain is Trypsin inhibitor 5, found in Cyclanthera pedata (Achocha).